The sequence spans 1031 residues: Putative glycine dehydrogenase (decarboxylating), mitochondrial (1031 aa).

The transit peptide at Met1–Leu49 directs the protein to the mitochondrion. Lys783 carries the N6-(pyridoxal phosphate)lysine modification.

This sequence belongs to the GcvP family. Requires pyridoxal 5'-phosphate as cofactor.

Its subcellular location is the mitochondrion. It carries out the reaction N(6)-[(R)-lipoyl]-L-lysyl-[glycine-cleavage complex H protein] + glycine + H(+) = N(6)-[(R)-S(8)-aminomethyldihydrolipoyl]-L-lysyl-[glycine-cleavage complex H protein] + CO2. In terms of biological role, the glycine cleavage system catalyzes the degradation of glycine. The P protein binds the alpha-amino group of glycine through its pyridoxal phosphate cofactor; CO(2) is released and the remaining methylamine moiety is then transferred to the lipoamide cofactor of the H protein. The chain is Putative glycine dehydrogenase (decarboxylating), mitochondrial (gcv2) from Schizosaccharomyces pombe (strain 972 / ATCC 24843) (Fission yeast).